We begin with the raw amino-acid sequence, 212 residues long: Thymidylate kinase (212 aa).

10–17 (GLEGAGKS) lines the ATP pocket.

This sequence belongs to the thymidylate kinase family.

The enzyme catalyses dTMP + ATP = dTDP + ADP. In terms of biological role, phosphorylation of dTMP to form dTDP in both de novo and salvage pathways of dTTP synthesis. The polypeptide is Thymidylate kinase (Vibrio cholerae serotype O1 (strain ATCC 39541 / Classical Ogawa 395 / O395)).